A 2294-amino-acid polypeptide reads, in one-letter code: Protein Ycf2 (2294 aa).

Position 1648 to 1655 (Gly-1648 to Ser-1655) interacts with ATP.

It belongs to the Ycf2 family.

The protein localises to the plastid. It localises to the chloroplast stroma. Functionally, probable ATPase of unknown function. Its presence in a non-photosynthetic plant (Epifagus virginiana) and experiments in tobacco indicate that it has an essential function which is probably not related to photosynthesis. The polypeptide is Protein Ycf2 (Arabidopsis thaliana (Mouse-ear cress)).